The following is a 1197-amino-acid chain: ATP-dependent helicase/nuclease subunit A (1197 aa).

The 457-residue stretch at 2–458 (KNWTTEQQAA…IDLAKNFRSR (457 aa)) folds into the UvrD-like helicase ATP-binding domain. Residue 23-30 (AAAGSGKT) participates in ATP binding. The 290-residue stretch at 485-774 (RAALYQGASF…RIMSIHKSKG (290 aa)) folds into the UvrD-like helicase C-terminal domain.

Belongs to the helicase family. AddA subfamily. Heterodimer of AddA and AddB/RexB. It depends on Mg(2+) as a cofactor.

It carries out the reaction Couples ATP hydrolysis with the unwinding of duplex DNA by translocating in the 3'-5' direction.. The enzyme catalyses ATP + H2O = ADP + phosphate + H(+). In terms of biological role, the heterodimer acts as both an ATP-dependent DNA helicase and an ATP-dependent, dual-direction single-stranded exonuclease. Recognizes the chi site generating a DNA molecule suitable for the initiation of homologous recombination. The AddA nuclease domain is required for chi fragment generation; this subunit has the helicase and 3' -&gt; 5' nuclease activities. In Alkaliphilus metalliredigens (strain QYMF), this protein is ATP-dependent helicase/nuclease subunit A.